The following is a 321-amino-acid chain: L-carnitine dehydrogenase (321 aa).

14-19 contributes to the NAD(+) binding site; sequence GSGVIG. Residues 317-321 are important for catalytic activity; the sequence is MTFSE.

The protein belongs to the 3-hydroxyacyl-CoA dehydrogenase family. L-carnitine dehydrogenase subfamily. In terms of assembly, homodimer.

Its subcellular location is the cytoplasm. The enzyme catalyses carnitine + NAD(+) = 3-dehydrocarnitine + NADH + H(+). It functions in the pathway amine and polyamine metabolism; carnitine metabolism. The enzyme activity is strongly inhibited by Ag(+), Ni(+), Hg(+), and p-chloromercuribenzoate, and partially inhibited by Li(+), Ca(2+), Mn(2+), Co(2+), Cu(2+), and Zn(2+). Catalyzes the NAD(+)-dependent oxidation of L-carnitine to 3-dehydrocarnitine. Is specific for L-carnitine and NAD(+) as substrates since D-carnitine, other carnitine analogs such as choline and betaine, and NADP(+) are not substrates. Despite a high similarity to 3-hydroxyacyl-CoA dehydrogenases, cannot dehydrogenate 3-hydroxybutylate and 3-hydroxybutyl-CoA. Is probably involved in a L-carnitine degradation pathway that allows Pseudomonas sp. strain NBRC 13558 to grow on L-carnitine as the sole source of carbon and nitrogen. The protein is L-carnitine dehydrogenase of Pseudomonas sp.